We begin with the raw amino-acid sequence, 217 residues long: Thymidylate kinase (217 aa).

16–23 (GIDGAGKT) provides a ligand contact to ATP.

The protein belongs to the thymidylate kinase family.

The catalysed reaction is dTMP + ATP = dTDP + ADP. Functionally, phosphorylation of dTMP to form dTDP in both de novo and salvage pathways of dTTP synthesis. In Xylella fastidiosa (strain M23), this protein is Thymidylate kinase.